A 71-amino-acid polypeptide reads, in one-letter code: Small ribosomal subunit protein bS21 (71 aa).

This sequence belongs to the bacterial ribosomal protein bS21 family.

This Shewanella sp. (strain MR-4) protein is Small ribosomal subunit protein bS21.